A 382-amino-acid polypeptide reads, in one-letter code: Galactokinase (382 aa).

Substrate is bound at residue 34–37 (EHTD). ATP is bound at residue 124–130 (GAGLSSS). Mg(2+)-binding residues include serine 130 and glutamate 162. Aspartate 174 (proton acceptor) is an active-site residue. A substrate-binding site is contributed by tyrosine 223.

The protein belongs to the GHMP kinase family. GalK subfamily.

The protein resides in the cytoplasm. It catalyses the reaction alpha-D-galactose + ATP = alpha-D-galactose 1-phosphate + ADP + H(+). Its pathway is carbohydrate metabolism; galactose metabolism. Catalyzes the transfer of the gamma-phosphate of ATP to D-galactose to form alpha-D-galactose-1-phosphate (Gal-1-P). This chain is Galactokinase, found in Escherichia coli O9:H4 (strain HS).